The primary structure comprises 468 residues: Tyrosine-protein phosphatase YopH (468 aa).

Residues 127–194 (ARGHVSSHSH…TVSPYGPEAR (68 aa)) are disordered. Residues 130–141 (HVSSHSHSALHA) are compositionally biased toward low complexity. The 310-residue stretch at 152-461 (SHLDPRTPPL…DVLIKLAEGQ (310 aa)) folds into the Tyrosine-protein phosphatase domain. Catalysis depends on Cys403, which acts as the Phosphocysteine intermediate.

It belongs to the protein-tyrosine phosphatase family. Non-receptor class subfamily.

It is found in the secreted. It catalyses the reaction O-phospho-L-tyrosyl-[protein] + H2O = L-tyrosyl-[protein] + phosphate. Its function is as follows. Essential virulence determinant. This protein is a protein tyrosine phosphatase. The essential function of YopH in Yersinia pathogenesis is host-protein dephosphorylation. It contributes to the ability of the bacteria to resist phagocytosis by peritoneal macrophages. The chain is Tyrosine-protein phosphatase YopH (yopH) from Yersinia pseudotuberculosis serotype I (strain IP32953).